The sequence spans 147 residues: D-aminoacyl-tRNA deacylase (147 aa).

Positions 136-137 (GP) match the Gly-cisPro motif, important for rejection of L-amino acids motif.

It belongs to the DTD family. As to quaternary structure, homodimer.

The protein localises to the cytoplasm. It carries out the reaction glycyl-tRNA(Ala) + H2O = tRNA(Ala) + glycine + H(+). It catalyses the reaction a D-aminoacyl-tRNA + H2O = a tRNA + a D-alpha-amino acid + H(+). In terms of biological role, an aminoacyl-tRNA editing enzyme that deacylates mischarged D-aminoacyl-tRNAs. Also deacylates mischarged glycyl-tRNA(Ala), protecting cells against glycine mischarging by AlaRS. Acts via tRNA-based rather than protein-based catalysis; rejects L-amino acids rather than detecting D-amino acids in the active site. By recycling D-aminoacyl-tRNA to D-amino acids and free tRNA molecules, this enzyme counteracts the toxicity associated with the formation of D-aminoacyl-tRNA entities in vivo and helps enforce protein L-homochirality. The polypeptide is D-aminoacyl-tRNA deacylase (Nitratiruptor sp. (strain SB155-2)).